The sequence spans 176 residues: RNA pyrophosphohydrolase (176 aa).

The Nudix hydrolase domain maps to 6–149 (GYRPNVGIIL…KRQVYQQALF (144 aa)). Positions 38-59 (GGIKHGESPEQAMFRELFEEVG) match the Nudix box motif.

It belongs to the Nudix hydrolase family. RppH subfamily. Requires a divalent metal cation as cofactor.

Accelerates the degradation of transcripts by removing pyrophosphate from the 5'-end of triphosphorylated RNA, leading to a more labile monophosphorylated state that can stimulate subsequent ribonuclease cleavage. This Aromatoleum aromaticum (strain DSM 19018 / LMG 30748 / EbN1) (Azoarcus sp. (strain EbN1)) protein is RNA pyrophosphohydrolase.